Reading from the N-terminus, the 214-residue chain is Osteoclast-stimulating factor 1 (214 aa).

Ser-2 carries the post-translational modification N-acetylserine. Residues 12–71 (GQVKVFRALYTFEPRTPDELYFEEGDIIYITDMSDTNWWKGTCKGRTGLIPSNYVAEQAE) form the SH3 domain. 3 ANK repeats span residues 72–101 (SIDN…GVNG), 105–135 (AGST…ELNQ), and 139–168 (LGDT…RTDL). Ser-202 and Ser-213 each carry phosphoserine.

In terms of assembly, interacts with SRC and SMN1. Interacts with FASLG.

It is found in the cytoplasm. Induces bone resorption, acting probably through a signaling cascade which results in the secretion of factor(s) enhancing osteoclast formation and activity. This Bos taurus (Bovine) protein is Osteoclast-stimulating factor 1 (OSTF1).